The chain runs to 576 residues: Calcium-dependent protein kinase 11 (576 aa).

Gly-2 carries N-myristoyl glycine lipidation. A disordered region spans residues 27–88 (PADAAPPALP…ANKAAPKVKR (62 aa)). Residues 41 to 56 (APSDQAPEPVTIPPSE) show a composition bias toward low complexity. The Protein kinase domain maps to 113 to 371 (YTIGKKLGQG…AHEALCHPWV (259 aa)). ATP-binding positions include 119–127 (LGQGQFGTT) and Lys-142. The active-site Proton acceptor is Asp-237. Residues 377–407 (APDKPLDSAVLSRLKQFSAMNKLKKMALRVI) are autoinhibitory domain. EF-hand domains are found at residues 414-449 (EEIA…VGAN), 450-485 (LMDS…INKV), 486-521 (EKED…FGIG), and 522-555 (DTRI…GNNA). Positions 427, 429, 431, 433, 438, 463, 465, 467, 469, 474, 499, 501, 503, 505, 510, 533, 535, 537, 539, and 544 each coordinate Ca(2+).

This sequence belongs to the protein kinase superfamily. Ser/Thr protein kinase family. CDPK subfamily.

Its subcellular location is the membrane. The enzyme catalyses L-seryl-[protein] + ATP = O-phospho-L-seryl-[protein] + ADP + H(+). It carries out the reaction L-threonyl-[protein] + ATP = O-phospho-L-threonyl-[protein] + ADP + H(+). Its activity is regulated as follows. Activated by calcium. Autophosphorylation may play an important role in the regulation of the kinase activity. May play a role in signal transduction pathways that involve calcium as a second messenger. The sequence is that of Calcium-dependent protein kinase 11 from Oryza sativa subsp. japonica (Rice).